The following is a 387-amino-acid chain: Gamma-butyrobetaine dioxygenase (387 aa).

Zn(2+) contacts are provided by cysteine 38, cysteine 40, cysteine 43, and histidine 82. Histidine 202, aspartate 204, and histidine 347 together coordinate Fe cation. The residue at position 351 (serine 351) is a Phosphoserine.

The protein belongs to the gamma-BBH/TMLD family. Requires Fe(2+) as cofactor. The cofactor is L-ascorbate.

The protein localises to the cytoplasm. The catalysed reaction is 4-(trimethylamino)butanoate + 2-oxoglutarate + O2 = carnitine + succinate + CO2. Its pathway is amine and polyamine biosynthesis; carnitine biosynthesis. Functionally, catalyzes the formation of L-carnitine from gamma-butyrobetaine. The chain is Gamma-butyrobetaine dioxygenase (Bbox1) from Mus musculus (Mouse).